The chain runs to 351 residues: Leukotriene B4 receptor 1 (351 aa).

Residues 1–21 are Extracellular-facing; sequence MAANTTSPAAPSSPGGMSLSL. Asn-4 carries N-linked (GlcNAc...) asparagine glycosylation. Residues 22–44 traverse the membrane as a helical segment; it reads LPIVLLSVALAVGLPGNSFVVWS. Residues 45–56 lie on the Cytoplasmic side of the membrane; that stretch reads ILKRMQKRTVTA. Residues 57 to 77 form a helical membrane-spanning segment; the sequence is LLVLNLALADLAVLLTAPFFL. Residues 78–93 are Extracellular-facing; the sequence is HFLARGTWSFREMGCR. A helical membrane pass occupies residues 94-115; the sequence is LCHYVCGISMYASVLLITIMSL. Over 116 to 140 the chain is Cytoplasmic; the sequence is DRSLAVARPFMSQKVRTKAFARWVL. A helical transmembrane segment spans residues 141 to 161; the sequence is AGIWVVSFLLAIPVLVYRTVK. Residues 162-179 are Extracellular-facing; sequence WNNRTLICAPNYPNKEHK. Asn-164 carries N-linked (GlcNAc...) asparagine glycosylation. A helical transmembrane segment spans residues 180–200; the sequence is VFHLLFEAITGFLLPFLAVVA. At 201-222 the chain is on the cytoplasmic side; it reads SYSDIGRRLQARRFRRSRRTGR. A helical transmembrane segment spans residues 223–243; it reads LVVLIILAFAAFWLPYHLVNL. Topologically, residues 244–268 are extracellular; the sequence is VEAGRTVAGWDKNSPAGQRLRLARY. Residues 269 to 289 form a helical membrane-spanning segment; sequence VLIALAFLSSSVNPVLYACAG. The Cytoplasmic portion of the chain corresponds to 290–351; it reads GGLLRSAGVG…TSSTIPESSK (62 aa). Composition is skewed to polar residues over residues 311–326 and 339–351; these read EVSS…QTPK and SFMT…ESSK. The disordered stretch occupies residues 311-351; the sequence is EVSSTRRGGTLVQTPKDTPACPEPGPTDSFMTSSTIPESSK.

The protein belongs to the G-protein coupled receptor 1 family. Phosphorylated by GRK6 upon leukotriene B4 binding; which promotes desensitization. In terms of tissue distribution, highly expressed on activated leukocytes, including eosinophils.

It localises to the cell membrane. Functionally, receptor for leukotriene B4, a potent chemoattractant involved in inflammation and immune response. The sequence is that of Leukotriene B4 receptor 1 (Ltb4r) from Mus musculus (Mouse).